A 249-amino-acid chain; its full sequence is 2,3-bisphosphoglycerate-dependent phosphoglycerate mutase (249 aa).

Substrate contacts are provided by residues 11 to 18, 24 to 25, R63, 90 to 93, K101, and 117 to 118; these read RHGESEWN, TG, ERHY, and RR. H12 acts as the Tele-phosphohistidine intermediate in catalysis. E90 (proton donor/acceptor) is an active-site residue. Positions 119-138 are disordered; sequence SYDTPPPPIERGSTYSQDAD. Residue 184 to 185 participates in substrate binding; that stretch reads GN.

Belongs to the phosphoglycerate mutase family. BPG-dependent PGAM subfamily.

The catalysed reaction is (2R)-2-phosphoglycerate = (2R)-3-phosphoglycerate. It functions in the pathway carbohydrate degradation; glycolysis; pyruvate from D-glyceraldehyde 3-phosphate: step 3/5. Catalyzes the interconversion of 2-phosphoglycerate and 3-phosphoglycerate. This is 2,3-bisphosphoglycerate-dependent phosphoglycerate mutase from Mycolicibacterium paratuberculosis (strain ATCC BAA-968 / K-10) (Mycobacterium paratuberculosis).